The primary structure comprises 160 residues: SsrA-binding protein (160 aa).

This sequence belongs to the SmpB family.

The protein localises to the cytoplasm. In terms of biological role, required for rescue of stalled ribosomes mediated by trans-translation. Binds to transfer-messenger RNA (tmRNA), required for stable association of tmRNA with ribosomes. tmRNA and SmpB together mimic tRNA shape, replacing the anticodon stem-loop with SmpB. tmRNA is encoded by the ssrA gene; the 2 termini fold to resemble tRNA(Ala) and it encodes a 'tag peptide', a short internal open reading frame. During trans-translation Ala-aminoacylated tmRNA acts like a tRNA, entering the A-site of stalled ribosomes, displacing the stalled mRNA. The ribosome then switches to translate the ORF on the tmRNA; the nascent peptide is terminated with the 'tag peptide' encoded by the tmRNA and targeted for degradation. The ribosome is freed to recommence translation, which seems to be the essential function of trans-translation. The protein is SsrA-binding protein of Klebsiella pneumoniae (strain 342).